Reading from the N-terminus, the 251-residue chain is uncharacterized protein (251 aa).

The first 18 residues, 1–18 (MRILIILSIILCSLSIRA), serve as a signal peptide directing secretion.

This sequence belongs to the MlaA family.

This is an uncharacterized protein from Rickettsia conorii (strain ATCC VR-613 / Malish 7).